Here is a 131-residue protein sequence, read N- to C-terminus: Protein Turandot M (131 aa).

The N-terminal stretch at Met-1 to Ala-23 is a signal peptide.

The protein belongs to the Turandot family.

The protein localises to the secreted. A humoral factor that may play a role in stress tolerance. Requires Mekk1 expression in the fat body to regulate response to septic injury and consequent immune response. In Drosophila yakuba (Fruit fly), this protein is Protein Turandot M.